The sequence spans 240 residues: C-type lectin domain family 4 member A (240 aa).

Residues 1–48 lie on the Cytoplasmic side of the membrane; sequence MASEITYAEVRIKNESNSSVTYSGSPAAPREKPTRHLSKPGSLLVPFT. Residues 5–10 carry the ITIM motif motif; that stretch reads ITYAEV. The segment at 18–38 is disordered; that stretch reads SSVTYSGSPAAPREKPTRHLS. The helical; Signal-anchor for type II membrane protein transmembrane segment at 49–69 threads the bilayer; that stretch reads SLMVLLLLLAITFLVAFIIYF. The Extracellular portion of the chain corresponds to 70–240; sequence QKYSQFLEEK…SVCQMKKIQL (171 aa). 3 disulfides stabilise this stretch: Cys-107–Cys-118, Cys-140–Cys-233, and Cys-208–Cys-225. In terms of domain architecture, C-type lectin spans 129 to 235; sequence SKASWSESEK…SGKQQSVCQM (107 aa). Residues Val-149 and Glu-155 each coordinate Ca(2+). N-linked (GlcNAc...) asparagine glycosylation is present at Asn-190. Ca(2+) contacts are provided by Glu-200, Ser-202, and Glu-206. Alpha-D-mannopyranose is bound by residues 200–202 and Glu-206; that span reads EPS. 211–213 serves as a coordination point for N-acetyl-D-glucosamine; sequence INH. Residues Asn-221 and Asp-222 each contribute to the Ca(2+) site.

May interact with PTPN6 via its ITIM site. As to expression, expressed by myeloid cells (dendritic cells, macrophages, and neutrophils) and B-cells.

Its subcellular location is the cell membrane. C-type lectin receptor that binds carbohydrates mannose and fucose but also weakly interacts with N-acetylglucosamine (GlcNAc) in a Ca(2+)-dependent manner. Involved in regulating immune reactivity. Once triggered by antigen, it is internalized by clathrin-dependent endocytosis and delivers its antigenic cargo into the antigen presentation pathway resulting in cross-priming of CD8(+) T cells. This cross-presentation and cross-priming are enhanced by TLR7 and TLR8 agonists with increased expansion of the CD8(+) T cells, high production of IFNG and TNF with reduced levels of IL4, IL5 and IL13. In plasmacytoid dendritic cells, inhibits TLR9-mediated IFNA and TNF production. May be involved via its ITIM motif (immunoreceptor tyrosine-based inhibitory motifs) in the inhibition of B-cell-receptor-mediated calcium mobilization and protein tyrosine phosphorylation. This is C-type lectin domain family 4 member A (Clec4a) from Rattus norvegicus (Rat).